Consider the following 134-residue polypeptide: Transmembrane protein 100 (134 aa).

The interval 1 to 24 (MTEEPTKENLGGPKSPTPVTMEKS) is disordered. Serine 15 carries the post-translational modification Phosphoserine. The next 2 membrane-spanning stretches (helical) occupy residues 56–76 (CIIP…AVAY) and 84–104 (VISI…ASSA). Serine 121 carries the phosphoserine modification.

As to quaternary structure, interacts (via C-terminus) with TRPA1 and TRPV1. Interacts with TASOR.

Its subcellular location is the cell membrane. It localises to the membrane. The protein resides in the perikaryon. It is found in the cytoplasm. The protein localises to the perinuclear region. Its subcellular location is the endoplasmic reticulum. Its function is as follows. Plays a role during embryonic arterial endothelium differentiation and vascular morphogenesis through the ACVRL1 receptor-dependent signaling pathway upon stimulation by bone morphogenetic proteins, such as GDF2/BMP9 and BMP10. Involved in the regulation of nociception, acting as a modulator of the interaction between TRPA1 and TRPV1, two molecular sensors and mediators of pain signals in dorsal root ganglia (DRG) neurons. Mechanistically, it weakens their interaction, thereby releasing the inhibition of TRPA1 by TRPV1 and increasing the single-channel open probability of the TRPA1-TRPV1 complex. This Rattus norvegicus (Rat) protein is Transmembrane protein 100 (Tmem100).